A 317-amino-acid polypeptide reads, in one-letter code: Fe-S cluster assembly protein DRE2 (317 aa).

Residues 1–131 are N-terminal SAM-like domain; that stretch reads MERMLFLSPP…KPNFGAQDTV (131 aa). Residues 132–209 are linker; it reads PLKLGKKKKA…EEALMDEEDM (78 aa). Residues C219, C230, C233, and C235 each coordinate [2Fe-2S] cluster. A fe-S binding site A region spans residues 219–235; that stretch reads CRPKAGKRRRACKDCTC. Residues C280, C283, C291, and C294 each coordinate [4Fe-4S] cluster. 2 short sequence motifs (cx2C motif) span residues 280-283 and 291-294; these read CGNC and CDGC. Residues 280–294 are fe-S binding site B; the sequence is CGNCALGDAFRCDGC.

The protein belongs to the anamorsin family. As to quaternary structure, monomer. Interacts with TAH18. Interacts with MIA40. Requires [2Fe-2S] cluster as cofactor. The cofactor is [4Fe-4S] cluster.

The protein localises to the cytoplasm. It localises to the mitochondrion intermembrane space. Its function is as follows. Component of the cytosolic iron-sulfur (Fe-S) protein assembly (CIA) machinery required for the maturation of extramitochondrial Fe-S proteins. Part of an electron transfer chain functioning in an early step of cytosolic Fe-S biogenesis, facilitating the de novo assembly of a [4Fe-4S] cluster on the scaffold complex CFD1-NBP35. Electrons are transferred to DRE2 from NADPH via the FAD- and FMN-containing protein TAH18. TAH18-DRE2 are also required for the assembly of the diferric tyrosyl radical cofactor of ribonucleotide reductase (RNR), probably by providing electrons for reduction during radical cofactor maturation in the catalytic small subunit RNR2. The protein is Fe-S cluster assembly protein DRE2 of Uncinocarpus reesii (strain UAMH 1704).